A 360-amino-acid chain; its full sequence is Peptide chain release factor 1 (360 aa).

The residue at position 235 (Gln235) is an N5-methylglutamine. The tract at residues 281–310 (AERQRQDAAQAESRRLQVGSGDRSQRIRTY) is disordered.

It belongs to the prokaryotic/mitochondrial release factor family. In terms of processing, methylated by PrmC. Methylation increases the termination efficiency of RF1.

The protein localises to the cytoplasm. Its function is as follows. Peptide chain release factor 1 directs the termination of translation in response to the peptide chain termination codons UAG and UAA. The chain is Peptide chain release factor 1 from Stenotrophomonas maltophilia (strain R551-3).